Here is a 339-residue protein sequence, read N- to C-terminus: Ornithine utilization regulator (339 aa).

One can recognise an HTH araC/xylS-type domain in the interval 241 to 338 (TRVRRLLLAR…GKLPSDYREA (98 aa)). DNA-binding regions (H-T-H motif) lie at residues 258–279 (EQAA…SSLG) and 305–328 (LYEI…RKWT).

In terms of biological role, probably activates the ArgJ gene that encodes ornithine acetyltransferase. Binds to its own promoter-operator region. Probably binds ornithine. This Pseudomonas aeruginosa (strain ATCC 15692 / DSM 22644 / CIP 104116 / JCM 14847 / LMG 12228 / 1C / PRS 101 / PAO1) protein is Ornithine utilization regulator (oruR).